Here is a 623-residue protein sequence, read N- to C-terminus: Endoglucanase 12 (623 aa).

At 1–73 the chain is on the cytoplasmic side; it reads MYSANHWGGS…LGCVVVKRKL (73 aa). A helical; Signal-anchor for type II membrane protein transmembrane segment spans residues 74-94; it reads LWWVLWTLLAAFILIGLPVII. Topologically, residues 95–623 are extracellular; it reads AKSIPKKKPH…TPPPPSKWKP (529 aa). The Nucleophile role is filled by Asp166. 6 N-linked (GlcNAc...) asparagine glycosylation sites follow: Asn217, Asn236, Asn324, Asn345, Asn408, and Asn425. Catalysis depends on residues His513, Asp561, and Glu570.

It belongs to the glycosyl hydrolase 9 (cellulase E) family. Ubiquitous.

The protein localises to the membrane. It catalyses the reaction Endohydrolysis of (1-&gt;4)-beta-D-glucosidic linkages in cellulose, lichenin and cereal beta-D-glucans.. In Oryza sativa subsp. japonica (Rice), this protein is Endoglucanase 12 (GLU3).